A 291-amino-acid polypeptide reads, in one-letter code: Nucleoid occlusion protein (291 aa).

The segment at residues 155–174 (EALAQRLGKGQSTVANKLRL) is a DNA-binding region (H-T-H motif).

This sequence belongs to the ParB family.

It is found in the cytoplasm. Its subcellular location is the nucleoid. Effects nucleoid occlusion by binding relatively nonspecifically to DNA and preventing the assembly of the division machinery in the vicinity of the nucleoid, especially under conditions that disturb the cell cycle. It helps to coordinate cell division and chromosome segregation by preventing the formation of the Z ring through the nucleoid, which would cause chromosome breakage. The chain is Nucleoid occlusion protein from Bacillus pumilus (strain SAFR-032).